We begin with the raw amino-acid sequence, 260 residues long: Histidine-binding periplasmic protein (260 aa).

Positions 1 to 22 (MKKLALSLSLVLAFSSATAAFA) are cleaved as a signal peptide. C60 and C67 are joined by a disulfide. L-histidine-binding residues include S91, S92, S94, R99, T143, and D183.

It belongs to the bacterial solute-binding protein 3 family. In terms of assembly, the complex is composed of two ATP-binding proteins (HisP), two transmembrane proteins (HisM and HisQ) and a solute-binding protein (HisJ).

Its subcellular location is the periplasm. Functionally, part of the ABC transporter complex HisPMQJ involved in histidine transport. Binds histidine. Interacts with HisQMP and stimulates ATPase activity of HisP, which results in histidine translocation. May have some additional function(s) in translocation that is independent of the stimulation of ATP hydrolysis. This is Histidine-binding periplasmic protein from Salmonella typhimurium (strain LT2 / SGSC1412 / ATCC 700720).